The primary structure comprises 215 residues: Chaperone protein TorD (215 aa).

The protein belongs to the TorD/DmsD family. TorD subfamily.

It localises to the cytoplasm. In terms of biological role, involved in the biogenesis of TorA. Acts on TorA before the insertion of the molybdenum cofactor and, as a result, probably favors a conformation of the apoenzyme that is competent for acquiring the cofactor. In Vibrio vulnificus (strain CMCP6), this protein is Chaperone protein TorD.